Consider the following 355-residue polypeptide: UDP-3-O-acylglucosamine N-acyltransferase (355 aa).

His258 acts as the Proton acceptor in catalysis.

It belongs to the transferase hexapeptide repeat family. LpxD subfamily. In terms of assembly, homotrimer.

The enzyme catalyses a UDP-3-O-[(3R)-3-hydroxyacyl]-alpha-D-glucosamine + a (3R)-hydroxyacyl-[ACP] = a UDP-2-N,3-O-bis[(3R)-3-hydroxyacyl]-alpha-D-glucosamine + holo-[ACP] + H(+). The protein operates within bacterial outer membrane biogenesis; LPS lipid A biosynthesis. Functionally, catalyzes the N-acylation of UDP-3-O-acylglucosamine using 3-hydroxyacyl-ACP as the acyl donor. Is involved in the biosynthesis of lipid A, a phosphorylated glycolipid that anchors the lipopolysaccharide to the outer membrane of the cell. The polypeptide is UDP-3-O-acylglucosamine N-acyltransferase (Bradyrhizobium diazoefficiens (strain JCM 10833 / BCRC 13528 / IAM 13628 / NBRC 14792 / USDA 110)).